Consider the following 620-residue polypeptide: Chaperone protein HscA homolog (620 aa).

Belongs to the heat shock protein 70 family.

Functionally, chaperone involved in the maturation of iron-sulfur cluster-containing proteins. Has a low intrinsic ATPase activity which is markedly stimulated by HscB. This chain is Chaperone protein HscA homolog, found in Pseudomonas putida (strain ATCC 47054 / DSM 6125 / CFBP 8728 / NCIMB 11950 / KT2440).